The primary structure comprises 246 residues: Ribonuclease PH (246 aa).

Phosphate contacts are provided by residues R91 and 129–131; that span reads GTR.

It belongs to the RNase PH family. Homohexameric ring arranged as a trimer of dimers.

The catalysed reaction is tRNA(n+1) + phosphate = tRNA(n) + a ribonucleoside 5'-diphosphate. In terms of biological role, phosphorolytic 3'-5' exoribonuclease that plays an important role in tRNA 3'-end maturation. Removes nucleotide residues following the 3'-CCA terminus of tRNAs; can also add nucleotides to the ends of RNA molecules by using nucleoside diphosphates as substrates, but this may not be physiologically important. Probably plays a role in initiation of 16S rRNA degradation (leading to ribosome degradation) during starvation. This Paraburkholderia xenovorans (strain LB400) protein is Ribonuclease PH.